We begin with the raw amino-acid sequence, 101 residues long: Small ribosomal subunit protein uS14 (101 aa).

This sequence belongs to the universal ribosomal protein uS14 family. As to quaternary structure, part of the 30S ribosomal subunit. Contacts proteins S3 and S10.

Binds 16S rRNA, required for the assembly of 30S particles and may also be responsible for determining the conformation of the 16S rRNA at the A site. In Ehrlichia ruminantium (strain Welgevonden), this protein is Small ribosomal subunit protein uS14.